Reading from the N-terminus, the 626-residue chain is Chaperone protein HtpG (626 aa).

The segment at M1–R339 is a; substrate-binding. Residues E340–K555 are b. The tract at residues L556–G626 is c.

The protein belongs to the heat shock protein 90 family. Homodimer.

It is found in the cytoplasm. Molecular chaperone. Has ATPase activity. The sequence is that of Chaperone protein HtpG from Histophilus somni (strain 2336) (Haemophilus somnus).